Reading from the N-terminus, the 355-residue chain is NADH dehydrogenase [ubiquinone] 1 alpha subcomplex subunit 10, mitochondrial (355 aa).

The transit peptide at methionine 1–lysine 35 directs the protein to the mitochondrion. At serine 250 the chain carries Phosphoserine; by PINK1. The residue at position 285 (lysine 285) is an N6-succinyllysine.

It belongs to the complex I NDUFA10 subunit family. As to quaternary structure, complex I is composed of 45 different subunits. This a component of the hydrophobic protein fraction. FAD is required as a cofactor. In terms of processing, phosphorylation at Ser-250 by PINK1 is required for the binding and/or reduction of the complex I substrate ubiquinone.

It is found in the mitochondrion matrix. In terms of biological role, accessory subunit of the mitochondrial membrane respiratory chain NADH dehydrogenase (Complex I), that is believed not to be involved in catalysis. Complex I functions in the transfer of electrons from NADH to the respiratory chain. The immediate electron acceptor for the enzyme is believed to be ubiquinone. This is NADH dehydrogenase [ubiquinone] 1 alpha subcomplex subunit 10, mitochondrial (NDUFA10) from Homo sapiens (Human).